Reading from the N-terminus, the 241-residue chain is Triosephosphate isomerase (241 aa).

9–11 (NWK) serves as a coordination point for substrate. Catalysis depends on His96, which acts as the Electrophile. The Proton acceptor role is filled by Glu165. Residues Gly171, Ser204, and 225–226 (GG) contribute to the substrate site.

It belongs to the triosephosphate isomerase family. As to quaternary structure, homodimer.

Its subcellular location is the cytoplasm. The enzyme catalyses D-glyceraldehyde 3-phosphate = dihydroxyacetone phosphate. It participates in carbohydrate biosynthesis; gluconeogenesis. Its pathway is carbohydrate degradation; glycolysis; D-glyceraldehyde 3-phosphate from glycerone phosphate: step 1/1. In terms of biological role, involved in the gluconeogenesis. Catalyzes stereospecifically the conversion of dihydroxyacetone phosphate (DHAP) to D-glyceraldehyde-3-phosphate (G3P). This is Triosephosphate isomerase from Prochlorococcus marinus (strain MIT 9515).